We begin with the raw amino-acid sequence, 203 residues long: dITP/XTP pyrophosphatase (203 aa).

Residue 8–13 (TANKGK) participates in substrate binding. Mg(2+) contacts are provided by E41 and D70. D70 functions as the Proton acceptor in the catalytic mechanism. Residues S71, 153–156 (FGYD), K176, and 181–182 (HR) each bind substrate.

It belongs to the HAM1 NTPase family. Homodimer. Requires Mg(2+) as cofactor.

The enzyme catalyses XTP + H2O = XMP + diphosphate + H(+). It catalyses the reaction dITP + H2O = dIMP + diphosphate + H(+). It carries out the reaction ITP + H2O = IMP + diphosphate + H(+). Its function is as follows. Pyrophosphatase that catalyzes the hydrolysis of nucleoside triphosphates to their monophosphate derivatives, with a high preference for the non-canonical purine nucleotides XTP (xanthosine triphosphate), dITP (deoxyinosine triphosphate) and ITP. Seems to function as a house-cleaning enzyme that removes non-canonical purine nucleotides from the nucleotide pool, thus preventing their incorporation into DNA/RNA and avoiding chromosomal lesions. The sequence is that of dITP/XTP pyrophosphatase from Listeria monocytogenes serovar 1/2a (strain ATCC BAA-679 / EGD-e).